The chain runs to 202 residues: Na(+)-translocating NADH-quinone reductase subunit E (202 aa).

6 consecutive transmembrane segments (helical) span residues 11–31 (AVFI…FLAV), 39–59 (FGLG…NNLI), 81–101 (FLKF…LEMA), 114–134 (GIFL…AFMV), 144–164 (VVFG…LAAV), and 180–200 (LGIT…FSGV).

The protein belongs to the NqrDE/RnfAE family. In terms of assembly, composed of six subunits; NqrA, NqrB, NqrC, NqrD, NqrE and NqrF.

Its subcellular location is the cell inner membrane. The catalysed reaction is a ubiquinone + n Na(+)(in) + NADH + H(+) = a ubiquinol + n Na(+)(out) + NAD(+). NQR complex catalyzes the reduction of ubiquinone-1 to ubiquinol by two successive reactions, coupled with the transport of Na(+) ions from the cytoplasm to the periplasm. NqrA to NqrE are probably involved in the second step, the conversion of ubisemiquinone to ubiquinol. This chain is Na(+)-translocating NADH-quinone reductase subunit E, found in Idiomarina loihiensis (strain ATCC BAA-735 / DSM 15497 / L2-TR).